The primary structure comprises 305 residues: MNAAGVRMVVTRARSRGTGASLRRRGEKAAPLRSGEAAAEERKSYSPVKRRRKAQRLSVAYEASEGEGGEGAEHLQAPSWQPQDWRQQLDNIRTMRSGKDAPVDQLGAEHCFDPSASPKVRRYQVLLSLMLSSQTKDQVTAGAMQRLRARGLTVDSILQTDDSTLGALIYPVGFWRSKVKYIKQTSAILQQRYDGDIPASVAELVALPGVGPKMAHLAMAVAWGTVSGIAVDTHVHRIANRLRWTKKATKSPEETRRALEEWLPRELWSEINGLLVGFGQQTCLPIRPRCQACLNRALCPAARGL.

The transit peptide at 1-28 (MNAAGVRMVVTRARSRGTGASLRRRGEK) directs the protein to the mitochondrion. The segment at 1 to 83 (MNAAGVRMVV…HLQAPSWQPQ (83 aa)) is disordered. Serine 64 carries the post-translational modification Phosphoserine. In terms of domain architecture, HhH spans 192–216 (RYDGDIPASVAELVALPGVGPKMAH). Lysine 213 functions as the Nucleophile; for N-glycosylase activity in the catalytic mechanism. 4 residues coordinate [4Fe-4S] cluster: cysteine 283, cysteine 290, cysteine 293, and cysteine 299.

Belongs to the Nth/MutY family. Interacts with YBX1. Interacts with ERCC5/XPG; the interaction stimulates NTHL1 activity and NTHL1 binding to its DNA substrate. [4Fe-4S] cluster is required as a cofactor.

The protein resides in the nucleus. Its subcellular location is the mitochondrion. It catalyses the reaction 2'-deoxyribonucleotide-(2'-deoxyribose 5'-phosphate)-2'-deoxyribonucleotide-DNA = a 3'-end 2'-deoxyribonucleotide-(2,3-dehydro-2,3-deoxyribose 5'-phosphate)-DNA + a 5'-end 5'-phospho-2'-deoxyribonucleoside-DNA + H(+). In terms of biological role, bifunctional DNA N-glycosylase with associated apurinic/apyrimidinic (AP) lyase function that catalyzes the first step in base excision repair (BER), the primary repair pathway for the repair of oxidative DNA damage. The DNA N-glycosylase activity releases the damaged DNA base from DNA by cleaving the N-glycosidic bond, leaving an AP site. The AP lyase activity cleaves the phosphodiester bond 3' to the AP site by a beta-elimination. Primarily recognizes and repairs oxidative base damage of pyrimidines. This Bos taurus (Bovine) protein is Endonuclease III-like protein 1.